Reading from the N-terminus, the 477-residue chain is V-type ATP synthase beta chain (477 aa).

This sequence belongs to the ATPase alpha/beta chains family.

Functionally, produces ATP from ADP in the presence of a proton gradient across the membrane. The V-type beta chain is a regulatory subunit. This Anaeromyxobacter dehalogenans (strain 2CP-1 / ATCC BAA-258) protein is V-type ATP synthase beta chain.